Consider the following 388-residue polypeptide: ATP phosphoribosyltransferase regulatory subunit (388 aa).

Belongs to the class-II aminoacyl-tRNA synthetase family. HisZ subfamily. In terms of assembly, heteromultimer composed of HisG and HisZ subunits.

The protein resides in the cytoplasm. It functions in the pathway amino-acid biosynthesis; L-histidine biosynthesis; L-histidine from 5-phospho-alpha-D-ribose 1-diphosphate: step 1/9. Functionally, required for the first step of histidine biosynthesis. May allow the feedback regulation of ATP phosphoribosyltransferase activity by histidine. This Acinetobacter baylyi (strain ATCC 33305 / BD413 / ADP1) protein is ATP phosphoribosyltransferase regulatory subunit.